The following is a 389-amino-acid chain: Na(+)/H(+) antiporter NhaA (389 aa).

The next 11 membrane-spanning stretches (helical) occupy residues 14 to 34 (AGGILLLVAVALAMLMANSPL), 59 to 79 (LILWINDGLMAVFFLLIGLEV), 95 to 115 (SLPTFAAIGGMLVPAGVYLLF), 124 to 144 (AGWAIPAATDIAFALGIMALL), 154 to 174 (VFLLALAIIDDLGVIVIIALF), 177 to 197 (TDLSTISLVIASLAIAGLVGL), 213 to 233 (LILWVAVLKSGVHATLAGVII), 257 to 277 (PWSTFFILPVFAFANAGVYVG), 292 to 312 (IALGLMLGKPIGVMVFSYIAV), 328 to 348 (IAPVAAMCGIGFTMSMFIASL), and 363 to 383 (LGTLIGSIMAALVGYFWLSKV).

This sequence belongs to the NhaA Na(+)/H(+) (TC 2.A.33) antiporter family.

It is found in the cell inner membrane. It catalyses the reaction Na(+)(in) + 2 H(+)(out) = Na(+)(out) + 2 H(+)(in). Its function is as follows. Na(+)/H(+) antiporter that extrudes sodium in exchange for external protons. This is Na(+)/H(+) antiporter NhaA from Shewanella baltica (strain OS155 / ATCC BAA-1091).